Reading from the N-terminus, the 181-residue chain is Urease accessory protein UreE (181 aa).

A disordered region spans residues 143–181 (FDPEPGAYNQAGQGHSHGHSHGHSHNHDHEHSHGHKHAH).

This sequence belongs to the UreE family.

The protein localises to the cytoplasm. Its function is as follows. Involved in urease metallocenter assembly. Binds nickel. Probably functions as a nickel donor during metallocenter assembly. The sequence is that of Urease accessory protein UreE from Marinobacter nauticus (strain ATCC 700491 / DSM 11845 / VT8) (Marinobacter aquaeolei).